The sequence spans 288 residues: uncharacterized protein (288 aa).

A compositionally biased stretch (basic and acidic residues) spans 1–12; it reads MTEGRCAQHPDG. The interval 1–20 is disordered; that stretch reads MTEGRCAQHPDGLDVQDVCD.

This sequence belongs to the class IV-like SAM-binding methyltransferase superfamily. RNA methyltransferase TrmH family.

This is an uncharacterized protein from Mycobacterium tuberculosis (strain ATCC 25618 / H37Rv).